The following is a 277-amino-acid chain: Pantothenate synthetase (277 aa).

Met28–His35 is a binding site for ATP. Residue His35 is the Proton donor of the active site. Gln59 serves as a coordination point for (R)-pantoate. Residue Gln59 coordinates beta-alanine. ATP-binding positions include Gly145–Asp148, Val174, and Leu182–Arg185.

The protein belongs to the pantothenate synthetase family. Homodimer.

The protein localises to the cytoplasm. It catalyses the reaction (R)-pantoate + beta-alanine + ATP = (R)-pantothenate + AMP + diphosphate + H(+). It functions in the pathway cofactor biosynthesis; (R)-pantothenate biosynthesis; (R)-pantothenate from (R)-pantoate and beta-alanine: step 1/1. In terms of biological role, catalyzes the condensation of pantoate with beta-alanine in an ATP-dependent reaction via a pantoyl-adenylate intermediate. The chain is Pantothenate synthetase from Anaplasma marginale (strain St. Maries).